A 1170-amino-acid polypeptide reads, in one-letter code: Probable mRNA-capping enzyme (1170 aa).

The N6-GMP-lysine intermediate role is filled by lysine 292. Residues 684–1007 form the mRNA cap 0 methyltransferase domain; sequence SNAAGMRAFN…LNRYYVFRKT (324 aa). Residue 693–694 participates in mRNA binding; the sequence is NN. Residues lysine 697, glycine 715, aspartate 737, and 813–815 contribute to the S-adenosyl-L-methionine site; that span reads QFT.

It in the N-terminal section; belongs to the dsDNA virus mRNA guanylyltransferase family. In the C-terminal section; belongs to the class I-like SAM-binding methyltransferase superfamily. mRNA cap 0 methyltransferase family.

The protein resides in the virion. The enzyme catalyses a 5'-end triphospho-ribonucleoside in mRNA + H2O = a 5'-end diphospho-ribonucleoside in mRNA + phosphate + H(+). It carries out the reaction a 5'-end diphospho-ribonucleoside in mRNA + GTP + H(+) = a 5'-end (5'-triphosphoguanosine)-ribonucleoside in mRNA + diphosphate. It catalyses the reaction a 5'-end (5'-triphosphoguanosine)-ribonucleoside in mRNA + S-adenosyl-L-methionine = a 5'-end (N(7)-methyl 5'-triphosphoguanosine)-ribonucleoside in mRNA + S-adenosyl-L-homocysteine. It functions in the pathway mRNA processing; mRNA capping. Functionally, responsible for methylating the 5'-cap structure of mRNAs. This is Probable mRNA-capping enzyme from Acanthamoeba polyphaga mimivirus (APMV).